The sequence spans 860 residues: Probable inorganic carbon transporter subunit DabA (860 aa).

The tract at residues 1 to 32 (MTTTSLGADAAHTHAMVPSAIPPEGSDAAGPD) is disordered. Zn(2+) is bound by residues C369, D371, H551, and C566.

The protein belongs to the inorganic carbon transporter (TC 9.A.2) DabA family. As to quaternary structure, forms a complex with DabB. It depends on Zn(2+) as a cofactor.

It localises to the cell inner membrane. Part of an energy-coupled inorganic carbon pump. This is Probable inorganic carbon transporter subunit DabA from Ralstonia pickettii (strain 12D).